The following is a 451-amino-acid chain: Methionine aminopeptidase 2-2 (451 aa).

A disordered region spans residues Met1–Tyr101. The segment covering Glu37–Ala51 has biased composition (acidic residues). Basic residues predominate over residues Lys60–Ala73. A substrate-binding site is contributed by His204. 3 residues coordinate a divalent metal cation: Asp224, Asp235, and His304. His312 provides a ligand contact to substrate. A divalent metal cation-binding residues include Glu337 and Glu432.

Belongs to the peptidase M24A family. Methionine aminopeptidase eukaryotic type 2 subfamily. Co(2+) is required as a cofactor. The cofactor is Zn(2+). Mn(2+) serves as cofactor. Requires Fe(2+) as cofactor.

It localises to the cytoplasm. The enzyme catalyses Release of N-terminal amino acids, preferentially methionine, from peptides and arylamides.. Functionally, cotranslationally removes the N-terminal methionine from nascent proteins. The N-terminal methionine is often cleaved when the second residue in the primary sequence is small and uncharged (Met-Ala-, Cys, Gly, Pro, Ser, Thr, or Val). In Pyrenophora tritici-repentis (strain Pt-1C-BFP) (Wheat tan spot fungus), this protein is Methionine aminopeptidase 2-2.